The chain runs to 290 residues: Taxis protein CheF1 (290 aa).

As to quaternary structure, interacts with chemotaxis (Che) proteins as well as flagella accessory (Fla) proteins.

In terms of biological role, involved in taxis signal transduction. Essential for the ability to control the direction of flagellar rotation. May have a role between CheY and the flagellum. The chain is Taxis protein CheF1 (cheF1) from Halobacterium salinarum (strain ATCC 29341 / DSM 671 / R1).